The primary structure comprises 620 residues: MASAFSLLTAGGAKFDKNRFKDDFQLFEAKKRKDRKGKSKQIDALAAGSALPSSLDFFGDHPHPQHKPEPEPESESESDFESDSGSSSTSIPAPPPQKITLTGSEPLPKSLHTNLPSLVNHESHSLTSAEGGPLLSALSRANIHSLWGVQCAVGGCLLEDRDTLCVAPTGSGKTLSYVLPTIVKLREPARKLKGTEEGKGVRALVVVPTHDLAVQIQGVIKAVTMGRHWRSMVLTKATEKAVWESAPGEAVKTGEDGDSEMKDGEDSGDEEEDEDDNESTGSVDEFAPKVSGNPEGLGIDVLVATPERLHHLIDSRRISLARTKYVILDESDRLLSSDFLPQVEPILSACSNPAVQKCFLSATMPAGAESLAKKWLKDGGVRVVVGVKDSAVTTVDQSLLYTGSESGKLLALRNLISSGQLPYPSLIFVQSIDRAEELYKTLVLDGIKVDAVHGGKAKTKRDEAIKDFRVGAVWMLVVTEVLARGMDFRGVKVVINYDFPQTVPSYIHRIGRTGRAGRPGKAITFFNIEDGPYLRTIANVLRSSGCPVPEYMLDMKKPTKNEKKKLAKAPPKRKAVGGGGRDLNREAGKKKKQMVEASKKRKMLERKGKGGNEEKNDDEE.

Residues 53-115 (SSLDFFGDHP…PLPKSLHTNL (63 aa)) form a disordered region. The span at 58 to 70 (FGDHPHPQHKPEP) shows a compositional bias: basic and acidic residues. Residues 71 to 82 (EPESESESDFES) are compositionally biased toward acidic residues. Residues 142–150 (NIHSLWGVQ) carry the Q motif motif. One can recognise a Helicase ATP-binding domain in the interval 154 to 382 (GGCLLEDRDT…KKWLKDGGVR (229 aa)). 167 to 174 (APTGSGKT) contacts ATP. The interval 244-292 (ESAPGEAVKTGEDGDSEMKDGEDSGDEEEDEDDNESTGSVDEFAPKVSG) is disordered. Positions 252–265 (KTGEDGDSEMKDGE) are enriched in basic and acidic residues. Positions 266–278 (DSGDEEEDEDDNE) are enriched in acidic residues. The DEAD box motif lies at 329–332 (DESD). Residues 394-556 (TVDQSLLYTG…PVPEYMLDMK (163 aa)) form the Helicase C-terminal domain. A disordered region spans residues 556 to 620 (KKPTKNEKKK…GNEEKNDDEE (65 aa)). Over residues 562 to 575 (EKKKLAKAPPKRKA) the composition is skewed to basic residues. Composition is skewed to basic and acidic residues over residues 582 to 598 (DLNR…VEAS) and 605 to 614 (ERKGKGGNEE).

It belongs to the DEAD box helicase family. DDX52/ROK1 subfamily. In terms of assembly, interacts with the U3 snoRNA and is associated with the 90S and 40S pre-ribosomes.

It localises to the nucleus. The protein localises to the nucleolus. The catalysed reaction is ATP + H2O = ADP + phosphate + H(+). ATP-dependent RNA helicase involved in 40S ribosomal subunit biogenesis. Required for the processing and cleavage of 35S pre-rRNA at sites A0, A1, and A2, leading to mature 18S rRNA. The chain is ATP-dependent RNA helicase ROK1 (ROK1) from Cryptococcus neoformans var. neoformans serotype D (strain B-3501A) (Filobasidiella neoformans).